A 302-amino-acid chain; its full sequence is Acetylglutamate kinase (302 aa).

Residues G73–G74, R95, and N200 contribute to the substrate site.

The protein belongs to the acetylglutamate kinase family. ArgB subfamily.

The protein resides in the cytoplasm. It carries out the reaction N-acetyl-L-glutamate + ATP = N-acetyl-L-glutamyl 5-phosphate + ADP. It functions in the pathway amino-acid biosynthesis; L-arginine biosynthesis; N(2)-acetyl-L-ornithine from L-glutamate: step 2/4. Its function is as follows. Catalyzes the ATP-dependent phosphorylation of N-acetyl-L-glutamate. The sequence is that of Acetylglutamate kinase from Sphingopyxis alaskensis (strain DSM 13593 / LMG 18877 / RB2256) (Sphingomonas alaskensis).